The chain runs to 743 residues: Dolichyl-phosphate-mannose--protein mannosyltransferase 5 (743 aa).

Residues 1-46 (MNKEHLLKVDPIPDVTIKRGPLRSFLITKPCDNLSSLRTVTSSKEK) lie on the Lumenal side of the membrane. Asparagine 33 carries N-linked (GlcNAc...) asparagine glycosylation. A helical membrane pass occupies residues 47–67 (LLVGCLLIFTAIVRLHNISLP). Topologically, residues 68–129 (NSVVFGENEV…IGTEYTANVP (62 aa)) are cytoplasmic. The chain crosses the membrane as a helical span at residues 130–150 (YVAMRFFSATLGIVSVLVLYL). The Lumenal segment spans residues 151–158 (TLRVSGVK). A helical membrane pass occupies residues 159–179 (IAVAAICAVCFAIENSFVTLS). Residue arginine 180 is a topological domain, cytoplasmic. A helical membrane pass occupies residues 181 to 201 (FTLIEGPFVFFMACAVYFFRR). The Lumenal segment spans residues 202-231 (SELYLPNSCKANKSLLAASIALGFAVSSKW). An N-linked (GlcNAc...) asparagine glycan is attached at asparagine 213. A helical membrane pass occupies residues 232–252 (AGLFTIAWAGIIVLWRVWFMI). Over 253–264 (GDLSRPIGSSIK) the chain is Cytoplasmic. A helical membrane pass occupies residues 265–285 (YMAFQFTCLLAIPAFIYFLIF). At 286-583 (SVHIKTLNVN…GREVYFLGNA (298 aa)) the chain is on the lumenal side. In terms of domain architecture, MIR 1 spans 320 to 374 (VAEVAVGSAVSLNHVGTAGGYLHSHLHNYPAGSMQQQVTLYPHIDQNNKWIIELA). Asparagine 380 and asparagine 386 each carry an N-linked (GlcNAc...) asparagine glycan. MIR domains follow at residues 384–444 (FQNL…IEID) and 454–510 (QEHI…IEEN). Residues 584 to 604 (VLWWSVTAFICTFIIGVAVEL) traverse the membrane as a helical segment. The Cytoplasmic segment spans residues 605 to 623 (LAWKLGVNILRDKHIINFH). The chain crosses the membrane as a helical span at residues 624-644 (YQVFQYLLGFAAHYFPYFFVG). Residues 645–646 (QK) lie on the Lumenal side of the membrane. The chain crosses the membrane as a helical span at residues 647-667 (LFLYDYLPAYYFGILAFGHAL). At 668 to 683 (DLISTYISNKRNNTGY) the chain is on the cytoplasmic side. Residues 684–704 (IVVAIFMVVCFYFFSEHSPLI) form a helical membrane-spanning segment. Topologically, residues 705-743 (YATGWSSNLCKRSKWLGSWDFYCNSLLLSDSHYELNAES) are lumenal.

This sequence belongs to the glycosyltransferase 39 family. As to quaternary structure, PMT3 and PMT5 form a functional heterodimer. Also forms a minor complex with PMT2.

Its subcellular location is the endoplasmic reticulum membrane. It catalyses the reaction a di-trans,poly-cis-dolichyl beta-D-mannosyl phosphate + L-seryl-[protein] = 3-O-(alpha-D-mannosyl)-L-seryl-[protein] + a di-trans,poly-cis-dolichyl phosphate + H(+). It carries out the reaction a di-trans,poly-cis-dolichyl beta-D-mannosyl phosphate + L-threonyl-[protein] = 3-O-(alpha-D-mannosyl)-L-threonyl-[protein] + a di-trans,poly-cis-dolichyl phosphate + H(+). The protein operates within protein modification; protein glycosylation. Protein O-mannosyltransferase involved in O-glycosylation which is essential for cell wall rigidity. Forms a heterodimeric complex with PMT3 and more rarely with PMT2 to transfer mannose from Dol-P-mannose to Ser or Thr residues on proteins. The sequence is that of Dolichyl-phosphate-mannose--protein mannosyltransferase 5 from Saccharomyces cerevisiae (strain ATCC 204508 / S288c) (Baker's yeast).